A 235-amino-acid chain; its full sequence is Ribosomal RNA small subunit methyltransferase G (235 aa).

S-adenosyl-L-methionine-binding positions include glycine 75, phenylalanine 80, 126-127, and arginine 145; that span reads AE.

This sequence belongs to the methyltransferase superfamily. RNA methyltransferase RsmG family.

The protein resides in the cytoplasm. Its function is as follows. Specifically methylates the N7 position of a guanine in 16S rRNA. The polypeptide is Ribosomal RNA small subunit methyltransferase G (Carboxydothermus hydrogenoformans (strain ATCC BAA-161 / DSM 6008 / Z-2901)).